The primary structure comprises 325 residues: S-adenosylmethionine carrier 1, chloroplastic/mitochondrial (325 aa).

Residues 1–38 (MAPLTLSVDVKSSSATSHDVSKRVMQSSQLKINKGFFA) constitute a chloroplast and mitochondrion transit peptide. Solcar repeat units lie at residues 52 to 124 (RTLF…TKQK), 133 to 215 (LSAV…LCLG), and 228 to 310 (ENAL…TKRT). 5 helical membrane-spanning segments follow: residues 55 to 75 (FEGFIAGGTAGVVVETALYPI), 97 to 117 (YSGLAGNIAGVLPASALFVGV), 132 to 152 (HLSAVAHLTAGAIGGLAASLI), 230 to 250 (ALIGAFAGALTGAVTTPLDVI), and 285 to 305 (GIGPRVLWIGIGGSIFFGVLE).

This sequence belongs to the mitochondrial carrier (TC 2.A.29) family. As to expression, expressed in seedlings, cotyledons, leaves and flowers. Lower levels of expression in stems and roots. Not detected in senescent leaves, petals and pollen grains.

The protein resides in the mitochondrion membrane. Its subcellular location is the plastid. The protein localises to the chloroplast membrane. With respect to regulation, inhibited strongly by tannic acid, bromocresol purple, mercuric chloride, mersalyl, p-hydroxymercuribenzoate, S-adenosylhomocysteine, S-adenosylcysteine and adenosylornithine, and to a lesser extent by N-ethylmaleimide, bathophenanthroline and pyridoxal-5'-P. Its function is as follows. Transporter involved in exchange reactions through membranes. Has a low uniporter activity. Specifically mediates the transport of S-adenosylmethionine (SAM) and its closest analogs. Probably involved in the uptake of SAM in exchange for S-adenosylhomocysteine (SAHC), which is produced from SAM in the mitochondrial matrix and plastidial stroma by methyltransferase activities. The chain is S-adenosylmethionine carrier 1, chloroplastic/mitochondrial (SAMC1) from Arabidopsis thaliana (Mouse-ear cress).